The sequence spans 123 residues: KxDL motif-containing protein LO9-177 (123 aa).

Residues 78 to 81 carry the KxDL motif; the sequence is KDDL.

It belongs to the KXD1 family. In terms of assembly, homodimer. Component of a nuclear cell elongation controlling complex made of ILI5/BUL1, LO9-177 and BC1. Binds directly to ILI5/BUL1, ILI4/BU1, BUL2 and BUL3. Binds to BC1 in the nucleus. Interacts with BCL1.

It is found in the nucleus. The protein resides in the cytoplasm. Its function is as follows. Contributes, together with ILI5/BUL1 and BC1, to the promotion of leaf inclination and grain size by modulating cell elongation. This is KxDL motif-containing protein LO9-177 from Oryza sativa subsp. indica (Rice).